We begin with the raw amino-acid sequence, 185 residues long: Hypoxanthine/guanine phosphoribosyltransferase (185 aa).

Belongs to the purine/pyrimidine phosphoribosyltransferase family. Archaeal HPRT subfamily. In terms of assembly, homodimer.

It localises to the cytoplasm. It carries out the reaction IMP + diphosphate = hypoxanthine + 5-phospho-alpha-D-ribose 1-diphosphate. The enzyme catalyses GMP + diphosphate = guanine + 5-phospho-alpha-D-ribose 1-diphosphate. The protein operates within purine metabolism; IMP biosynthesis via salvage pathway; IMP from hypoxanthine: step 1/1. Catalyzes a salvage reaction resulting in the formation of IMP that is energically less costly than de novo synthesis. The chain is Hypoxanthine/guanine phosphoribosyltransferase from Methanococcus maripaludis (strain C6 / ATCC BAA-1332).